The chain runs to 190 residues: (S)-2-hydroxypropylphosphonic acid epoxidase (190 aa).

An HTH cro/C1-type domain is found at 10-60; the sequence is KAHLEALLATRKMTLEHLQDVRHDATQVYFDGLEHLQNVAQYLAIPLSEFF. Positions 20–40 form a DNA-binding region, H-T-H motif; sequence RKMTLEHLQDVRHDATQVYFD. Residues arginine 87, tyrosine 95, 125–128, and glutamate 132 each bind substrate; that span reads NGGH. Fe cation-binding residues include histidine 128, glutamate 132, and histidine 171. Positions 128–176 constitute a Cupin type-2 domain; the sequence is HGSREIVYVTRGAVRVRWVGDNDELKEDVLNEGDSIFILPNVPHSFTNH.

It belongs to the non-heme iron-dependent dioxygenase family. As to quaternary structure, homotrimer. The cofactor is Fe(2+).

It catalyses the reaction (S)-2-hydroxypropylphosphonate + H2O2 = (1R,2S)-epoxypropylphosphonate + 2 H2O. Its pathway is antibiotic biosynthesis; fosfomycin biosynthesis. In terms of biological role, non-heme-dependent dioxygenase that catalyzes the oxidative epoxidation of (S)-2-hydroxypropylphosphonate into (1R,2S)-epoxypropylphosphonate, the final step in the biosynthesis of fosfomycin antibiotic. This is (S)-2-hydroxypropylphosphonic acid epoxidase (hppE) from Pseudomonas syringae.